Here is a 70-residue protein sequence, read N- to C-terminus: Cecropin-P1 (70 aa).

The N-terminal stretch at 1–13 (MFLIYLFVQTAES) is a signal peptide. The propeptide at 45–70 (RRRFVAEQDAIHSRVSREVPTLSDSV) is removed in mature form.

As to expression, expressed in the body wall, intestine, uterus and ovary.

The protein localises to the secreted. Its function is as follows. Has antibacterial activity against several Gram-positive and Gram-negative bacteria. Is weakly active against yeasts. Acts by a nonpore mechanism. The sequence is that of Cecropin-P1 (ASCEC-1) from Ascaris suum (Pig roundworm).